Reading from the N-terminus, the 663-residue chain is UvrABC system protein B (663 aa).

Positions 1 to 10 (MIDKRDDKPF) are enriched in basic and acidic residues. Residues 1 to 23 (MIDKRDDKPFKLKSKYKPSGDQP) form a disordered region. Positions 31-418 (DNIEGGEKAQ…TNTIIEQIIR (388 aa)) constitute a Helicase ATP-binding domain. An ATP-binding site is contributed by 44 to 51 (GATGTGKT). A Beta-hairpin motif is present at residues 97–120 (YYDYYQPEAYVPSSDTYIEKDSSV). Residues 435 to 601 (QMDDLLGEIN…TIKKDIRGLI (167 aa)) enclose the Helicase C-terminal domain. The region spanning 627 to 662 (KEAINALQKQMQEAAELLDFELAAQMRDLILELKLM) is the UVR domain.

Belongs to the UvrB family. As to quaternary structure, forms a heterotetramer with UvrA during the search for lesions. Interacts with UvrC in an incision complex.

It is found in the cytoplasm. The UvrABC repair system catalyzes the recognition and processing of DNA lesions. A damage recognition complex composed of 2 UvrA and 2 UvrB subunits scans DNA for abnormalities. Upon binding of the UvrA(2)B(2) complex to a putative damaged site, the DNA wraps around one UvrB monomer. DNA wrap is dependent on ATP binding by UvrB and probably causes local melting of the DNA helix, facilitating insertion of UvrB beta-hairpin between the DNA strands. Then UvrB probes one DNA strand for the presence of a lesion. If a lesion is found the UvrA subunits dissociate and the UvrB-DNA preincision complex is formed. This complex is subsequently bound by UvrC and the second UvrB is released. If no lesion is found, the DNA wraps around the other UvrB subunit that will check the other stand for damage. In Streptococcus pyogenes serotype M6 (strain ATCC BAA-946 / MGAS10394), this protein is UvrABC system protein B.